Here is a 271-residue protein sequence, read N- to C-terminus: Methyltransferase psoC (271 aa).

The protein belongs to the methyltransferase superfamily. LaeA methyltransferase family.

Its pathway is secondary metabolite biosynthesis. Functionally, methyltransferase; part of the gene cluster that mediates the biosynthesis of pseurotin A, a competitive inhibitor of chitin synthase and an inducer of nerve-cell proliferation. The PKS-NRPS hybrid synthetase psoA is responsible for the biosynthesis of azaspirene, one of the first intermediates having the 1-oxa-7-azaspiro[4,4]-non-2-ene-4,6-dione core of pseurotin, via condensation of one acetyl-CoA, 4 malonyl-CoA, and a L-phenylalanine molecule. The dual-functional monooxygenase/methyltransferase psoF seems to be involved in the addition of the C3 methyl group onto the pseurotin scaffold. Azaspirene is then converted to synerazol through 4 steps including oxidation of C17 by the cytochrome P450 monooxygenase psoD, O-methylation of the hydroxy group of C8 by the methyltransferase psoC, and the trans-to-cis isomerization of the C13 olefin by the glutathione S-transferase psoE. The fourth step of synerazol production is performed by the dual-functional monooxygenase/methyltransferase psoF which seems to catalyze the epoxidation of the intermediate deepoxy-synerazol. Synerazol can be attacked by a water molecule nonenzymatically at two different positions to yield two diol products, pseurotin A and pseurotin D. This Aspergillus fumigatus (strain ATCC MYA-4609 / CBS 101355 / FGSC A1100 / Af293) (Neosartorya fumigata) protein is Methyltransferase psoC.